The sequence spans 321 residues: Probable pectate lyase A (321 aa).

The signal sequence occupies residues 1 to 18; it reads MKFVATLIACGLSGLALA. A glycan (N-linked (GlcNAc...) asparagine) is linked at N93. Ca(2+) is bound by residues D134, D163, and D167. The active site involves R220. N238 carries an N-linked (GlcNAc...) asparagine glycan.

It belongs to the polysaccharide lyase 1 family. Requires Ca(2+) as cofactor.

The protein localises to the secreted. The catalysed reaction is Eliminative cleavage of (1-&gt;4)-alpha-D-galacturonan to give oligosaccharides with 4-deoxy-alpha-D-galact-4-enuronosyl groups at their non-reducing ends.. In terms of biological role, pectinolytic enzyme consist of four classes of enzymes: pectin lyase, polygalacturonase, pectin methylesterase and rhamnogalacturonase. Among pectinolytic enzymes, pectin lyase is the most important in depolymerization of pectin, since it cleaves internal glycosidic bonds of highly methylated pectins. Favors pectate, the anion, over pectin, the methyl ester. The chain is Probable pectate lyase A (plyA) from Aspergillus fumigatus (strain ATCC MYA-4609 / CBS 101355 / FGSC A1100 / Af293) (Neosartorya fumigata).